Reading from the N-terminus, the 179-residue chain is Insulin-like growth factor 2 (179 aa).

The signal sequence occupies residues 1 to 24 (MGITAGKSMLALLAFLAFASCCYA). The tract at residues 25–52 (AYRPSETLCGGELVDTLQFVCGDRGFYF) is b. 3 disulfide bridges follow: C33–C71, C45–C84, and C70–C75. The tract at residues 53–64 (SRPSSRINRRSR) is c. The a stretch occupies residues 65–85 (GIVEECCFRSCDLALLETYCA). Residues 86 to 91 (APAKSE) are d. Positions 92–179 (RDVSASTTVL…GGASSEASSD (88 aa)) are cleaved as a propeptide — e peptide. T106 is a glycosylation site (O-linked (GalNAc...) threonine). A glycan (O-linked (GalNAc...) serine) is linked at S154. Positions 160 to 179 (ALPTQDPATHGGASSEASSD) are disordered. T163 is a glycosylation site (O-linked (GalNAc...) threonine).

This sequence belongs to the insulin family. As to quaternary structure, interacts with MYORG; this interaction is required for IGF2 secretion. Interacts with integrins ITGAV:ITGB3 and ITGA6:ITGB4; integrin-binding is required for IGF2 signaling. Interacts with IGFBP2. Post-translationally, proteolytically processed by PCSK4, proIGF2 is cleaved at Arg-128 and Arg-92 to generate big-IGF2 and mature IGF2.

It localises to the secreted. In terms of biological role, the insulin-like growth factors possess growth-promoting activity. Major fetal growth hormone in mammals. Plays a key role in regulating fetoplacental development. IGF2 is influenced by placental lactogen. Also involved in tissue differentiation. In adults, involved in glucose metabolism in adipose tissue, skeletal muscle and liver. Acts as a ligand for integrin which is required for IGF2 signaling. Positively regulates myogenic transcription factor MYOD1 function by facilitating the recruitment of transcriptional coactivators, thereby controlling muscle terminal differentiation. Inhibits myoblast differentiation and modulates metabolism via increasing the mitochondrial respiration rate. Its function is as follows. Preptin undergoes glucose-mediated co-secretion with insulin, and acts as a physiological amplifier of glucose-mediated insulin secretion. Exhibits osteogenic properties by increasing osteoblast mitogenic activity through phosphoactivation of MAPK1 and MAPK3. In Ovis aries (Sheep), this protein is Insulin-like growth factor 2.